The following is a 458-amino-acid chain: tRNA modification GTPase MnmE (458 aa).

Residues arginine 22, glutamate 84, and arginine 123 each contribute to the (6S)-5-formyl-5,6,7,8-tetrahydrofolate site. Residues glycine 220 to phenylalanine 379 form the TrmE-type G domain. Asparagine 230 provides a ligand contact to K(+). GTP is bound by residues asparagine 230–serine 235, threonine 249–threonine 255, and aspartate 274–glycine 277. Serine 234 contacts Mg(2+). K(+)-binding residues include threonine 249, isoleucine 251, and threonine 254. Residue threonine 255 coordinates Mg(2+). Residue lysine 458 coordinates (6S)-5-formyl-5,6,7,8-tetrahydrofolate.

This sequence belongs to the TRAFAC class TrmE-Era-EngA-EngB-Septin-like GTPase superfamily. TrmE GTPase family. Homodimer. Heterotetramer of two MnmE and two MnmG subunits. Requires K(+) as cofactor.

Its subcellular location is the cytoplasm. Its function is as follows. Exhibits a very high intrinsic GTPase hydrolysis rate. Involved in the addition of a carboxymethylaminomethyl (cmnm) group at the wobble position (U34) of certain tRNAs, forming tRNA-cmnm(5)s(2)U34. The polypeptide is tRNA modification GTPase MnmE (Bacillus thuringiensis (strain Al Hakam)).